We begin with the raw amino-acid sequence, 930 residues long: Nonribosomal peptide synthetase acyN (930 aa).

The interval 15–436 (LDPQDNKISV…AGRAKETIIV (422 aa)) is adenylation (A) domain. The region spanning 567-646 (APSNETEATI…GLAGTLETLM (80 aa)) is the Carrier domain. Ser604 carries the O-(pantetheine 4'-phosphoryl)serine modification. The thioesterase (TE) domain stretch occupies residues 665–914 (PLWLVHPGVG…HYTMLGPDNI (250 aa)).

The protein belongs to the NRP synthetase family.

The catalysed reaction is 2 3-phenylpyruvate + 2 ATP = polyporic acid + 2 AMP + 2 diphosphate + H(+). The protein operates within secondary metabolite biosynthesis. Hydroxyphenylpyruvate acts more like a competitive inhibitor rather than a substrate. Its function is as follows. Nonribosomal peptide synthetase that mediates the biosynthesis of polyporic acid via the condensation of 2 phenylpyruvate units. Polyporic acid is further hydroxylaed by the cytochrome P450 monooxygenase MO6277 into less toxic ascocorynin. This Ascocoryne sarcoides (Purple jellydisc fungus) protein is Nonribosomal peptide synthetase acyN.